Here is a 548-residue protein sequence, read N- to C-terminus: MKKYYAVTGIALAVGMLCTTQLAGATQAADPSVGSLDSSNVVTEFSAQGNVEQITFKSAIKSAPMSSARSAQTSAIIPGLKNLFVSAPGSDFSLNDSSNNYIKRFTQNIAGIPVLGSSITEVLDGQGAVTSAIGAVTSATKGAFPADLAAGQAAALASATKIASAGKDASAISLVDQKAIWFDAVLIGKGATGSVAVPAYQFSFTTGFAESRVLTVAANDGAILNDRTDRKDINRVVCDANSKVIDLEASNADALLKCGKTQANKPTRIEGQAASSVADVNSVYNFLNDTASFYGANTKANDLTALIGNDEGDGLGKAMRAVVRICVTDSQNGEQCPFANAFWYNGQMTYGQGVTTDDITGHELTHGVTEKTNGLVYANESGAINESMSDVFGEFIDLSNGSSDDTAANRWAIGEGSSLGVIRSMKDPGKYGEPAIYKGSNWKPTATNPNDNNDQGGVHSNSGVGNKLAFLITDGQTFNGQTVTGIGIAKAAQLYWAAQRQLTANATYSSLGKALNSACSANVSNNVAGTTAANCTQVANAIKAVGIK.

The signal sequence occupies residues 1–28 (MKKYYAVTGIALAVGMLCTTQLAGATQA). Position 362 (His-362) interacts with Zn(2+). Residue Glu-363 is part of the active site. Positions 366 and 386 each coordinate Zn(2+). The disordered stretch occupies residues 440–459 (SNWKPTATNPNDNNDQGGVH). The span at 442-459 (WKPTATNPNDNNDQGGVH) shows a compositional bias: polar residues. Catalysis depends on His-459, which acts as the Proton donor.

This sequence belongs to the peptidase M4 family. Ca(2+) is required as a cofactor. Requires Zn(2+) as cofactor.

Its subcellular location is the secreted. The protein resides in the cell wall. In terms of biological role, zinc metalloprotease with hemolytic properties. This Renibacterium salmoninarum protein is Zinc metalloproteinase (hly).